The chain runs to 136 residues: Large ribosomal subunit protein uL16 (136 aa).

It belongs to the universal ribosomal protein uL16 family. In terms of assembly, part of the 50S ribosomal subunit.

Functionally, binds 23S rRNA and is also seen to make contacts with the A and possibly P site tRNAs. This chain is Large ribosomal subunit protein uL16, found in Aliivibrio salmonicida (strain LFI1238) (Vibrio salmonicida (strain LFI1238)).